Reading from the N-terminus, the 388-residue chain is Succinate--CoA ligase [ADP-forming] subunit beta (388 aa).

Positions Lys9 to His244 constitute an ATP-grasp domain. ATP contacts are provided by residues Lys46, Gly53–Gly55, Glu99, Thr102, and Glu107. Asn199 and Asp213 together coordinate Mg(2+). Residues Asn264 and Gly321–Val323 contribute to the substrate site.

Belongs to the succinate/malate CoA ligase beta subunit family. In terms of assembly, heterotetramer of two alpha and two beta subunits. Requires Mg(2+) as cofactor.

It catalyses the reaction succinate + ATP + CoA = succinyl-CoA + ADP + phosphate. It carries out the reaction GTP + succinate + CoA = succinyl-CoA + GDP + phosphate. Its pathway is carbohydrate metabolism; tricarboxylic acid cycle; succinate from succinyl-CoA (ligase route): step 1/1. Functionally, succinyl-CoA synthetase functions in the citric acid cycle (TCA), coupling the hydrolysis of succinyl-CoA to the synthesis of either ATP or GTP and thus represents the only step of substrate-level phosphorylation in the TCA. The beta subunit provides nucleotide specificity of the enzyme and binds the substrate succinate, while the binding sites for coenzyme A and phosphate are found in the alpha subunit. This Shewanella pealeana (strain ATCC 700345 / ANG-SQ1) protein is Succinate--CoA ligase [ADP-forming] subunit beta.